We begin with the raw amino-acid sequence, 219 residues long: Transcriptional regulatory protein QseB (219 aa).

A Response regulatory domain is found at 2–116 (RILLVEDDTL…EVAARLEALV (115 aa)). Asp51 bears the 4-aspartylphosphate mark. The segment at residues 124-218 (SSELRHGQVT…VHGIGYTLGD (95 aa)) is a DNA-binding region (ompR/PhoB-type).

Post-translationally, phosphorylated by QseC.

Its subcellular location is the cytoplasm. Member of a two-component regulatory system QseB/QseC. Activates the flagella regulon by activating transcription of flhDC. The protein is Transcriptional regulatory protein QseB (qseB) of Salmonella typhimurium (strain LT2 / SGSC1412 / ATCC 700720).